The chain runs to 206 residues: Small ribosomal subunit protein uS4 (206 aa).

Positions 98–155 (TRLDNVVYRLGWALSRDQARQLVSHGKIAVNGKRVNIPSYNLKPGDVVELLDKDLIPV) constitute an S4 RNA-binding domain.

Belongs to the universal ribosomal protein uS4 family. Part of the 30S ribosomal subunit. Contacts protein S5. The interaction surface between S4 and S5 is involved in control of translational fidelity.

In terms of biological role, one of the primary rRNA binding proteins, it binds directly to 16S rRNA where it nucleates assembly of the body of the 30S subunit. Functionally, with S5 and S12 plays an important role in translational accuracy. This Dictyoglomus thermophilum (strain ATCC 35947 / DSM 3960 / H-6-12) protein is Small ribosomal subunit protein uS4.